We begin with the raw amino-acid sequence, 142 residues long: Large ribosomal subunit protein uL11 (142 aa).

It belongs to the universal ribosomal protein uL11 family. In terms of assembly, part of the ribosomal stalk of the 50S ribosomal subunit. Interacts with L10 and the large rRNA to form the base of the stalk. L10 forms an elongated spine to which L12 dimers bind in a sequential fashion forming a multimeric L10(L12)X complex. Post-translationally, one or more lysine residues are methylated.

Its function is as follows. Forms part of the ribosomal stalk which helps the ribosome interact with GTP-bound translation factors. In Histophilus somni (strain 129Pt) (Haemophilus somnus), this protein is Large ribosomal subunit protein uL11.